A 262-amino-acid chain; its full sequence is Thrombin-like enzyme gyroxin B1.3 (262 aa).

The signal sequence occupies residues Met-1–Ala-18. The propeptide occupies Gln-19–Ser-262. A Peptidase S1 domain is found at Val-25–Ala-253. 6 cysteine pairs are disulfide-bonded: Cys-31-Cys-165, Cys-52-Cys-68, Cys-102-Cys-260, Cys-144-Cys-214, Cys-176-Cys-193, and Cys-204-Cys-229. The active-site Charge relay system is His-67. Asn-105 carries N-linked (GlcNAc...) asparagine glycosylation. Asp-112 (charge relay system) is an active-site residue. Catalysis depends on Ser-208, which acts as the Charge relay system.

It belongs to the peptidase S1 family. Snake venom subfamily. Monomer. As to expression, expressed by the venom gland.

Its subcellular location is the secreted. Functionally, thrombin-like snake venom serine protease. Displays a specificity similar to trypsin. Releases only fibrinopeptide A in the conversion of fibrinogen to fibrin. Reversibly increases the permeability of the blood brain barrier (BBB) in mice. Induces the barrel rotation syndrome in mice, which is manifested by gyroxin-like, rapid rolling motions. This syndrome may be due to its effect on BBB permeability, and certainly also to other actions affecting endogenous substrates present in the endothelium, nervous tissues or blood. Also shows a moderate inhibitory activity on the human voltage-gated potassium channel Kv10.1/KCNH1/EAG1 (58% current inhibition at 5 uM). It blocks Kv10.1/KCNH1/EAG1 in a time and dose-dependent manner and with a mechanism independent of its enzymatic activity. It may have a preference in interacting with Kv10.1/KCNH1/EAG1 in its closed state, since the inhibitory effect of the toxin is decreased at more depolarized potentials. This chain is Thrombin-like enzyme gyroxin B1.3, found in Crotalus durissus terrificus (South American rattlesnake).